Consider the following 616-residue polypeptide: Chaperone protein HscA (616 aa).

Belongs to the heat shock protein 70 family.

In terms of biological role, chaperone involved in the maturation of iron-sulfur cluster-containing proteins. Has a low intrinsic ATPase activity which is markedly stimulated by HscB. Involved in the maturation of IscU. This is Chaperone protein HscA from Salmonella paratyphi A (strain ATCC 9150 / SARB42).